The following is a 526-amino-acid chain: Methane monooxygenase component A alpha chain (526 aa).

Fe cation contacts are provided by Glu114, Glu144, and His147. The active site involves Cys151. Fe cation-binding residues include Glu209, Glu243, and His246.

The protein belongs to the TmoA/XamoA family. As to quaternary structure, m.trichosporium has two forms of methane monooxygenase, a soluble and a membrane-bound type. The soluble type consists of four components (A to D): protein A, comprising three chains, in an alpha-2, beta-2, gamma-2 configuration, is a nonheme iron protein containing an unusual mu-hydroxo bridge structure at its active site and interacts with both oxygen and methane. The cofactor is Fe cation.

It catalyses the reaction methane + NADH + O2 + H(+) = methanol + NAD(+) + H2O. The enzyme catalyses methane + NADPH + O2 + H(+) = methanol + NADP(+) + H2O. Responsible for the initial oxygenation of methane to methanol in methanotrophs. It also catalyzes the monohydroxylation of a variety of unactivated alkenes, alicyclic, aromatic and heterocyclic compounds. This is Methane monooxygenase component A alpha chain (mmoX) from Methylosinus trichosporium.